Here is a 146-residue protein sequence, read N- to C-terminus: VQLSGEEKAAVLALWDKVNEEEVGGEALGRLLVVYPWTQRFFDSFGDLSNPGAVMGNPKVKAHGKKVLHSFGEGVHHLDNLKGTFAALSELHCDKLHVDPENFRLLGNVLVVVLARHFGKDFTPELQASYQKVVAGVANALAHKYH.

N-acetylvaline is present on V1. The 145-residue stretch at 2-146 (QLSGEEKAAV…VANALAHKYH (145 aa)) folds into the Globin domain. Residue S44 is modified to Phosphoserine. K59 is modified (N6-acetyllysine). Position 63 (H63) interacts with heme b. N6-acetyllysine is present on K82. H92 contacts heme b. C93 is modified (S-nitrosocysteine). An N6-acetyllysine modification is found at K144.

This sequence belongs to the globin family. In terms of assembly, heterotetramer of two alpha chains and two beta chains. As to expression, red blood cells.

Its function is as follows. Involved in oxygen transport from the lung to the various peripheral tissues. The sequence is that of Hemoglobin subunit beta (HBB) from Equus caballus (Horse).